The primary structure comprises 369 residues: mRNA cap guanine-N(7) methyltransferase 1 (369 aa).

The interval 1–55 (MNKRPRDEPSSSFASAPKRQYGAGGGGYGGHGYSEERSSARRVADHYSARSNQTL) is disordered. Gly residues predominate over residues 22 to 32 (GAGGGGYGGHG). The span at 33–48 (YSEERSSARRVADHYS) shows a compositional bias: basic and acidic residues. An mRNA cap 0 methyltransferase domain is found at 61-340 (SPIIHLKKLN…LYLAFVLRKR (280 aa)). 70 to 71 (NN) contacts mRNA. S-adenosyl-L-methionine is bound by residues lysine 74, alanine 92, aspartate 114, 149–150 (DC), and 171–173 (QFA).

This sequence belongs to the class I-like SAM-binding methyltransferase superfamily. mRNA cap 0 methyltransferase family.

The protein localises to the nucleus. The catalysed reaction is a 5'-end (5'-triphosphoguanosine)-ribonucleoside in mRNA + S-adenosyl-L-methionine = a 5'-end (N(7)-methyl 5'-triphosphoguanosine)-ribonucleoside in mRNA + S-adenosyl-L-homocysteine. In terms of biological role, mRNA-capping methyltransferase that methylates the N7 position of the added guanosine to the 5'-cap structure of mRNAs. Binds RNA containing 5'-terminal GpppC. The protein is mRNA cap guanine-N(7) methyltransferase 1 of Oryza sativa subsp. japonica (Rice).